The following is a 219-amino-acid chain: MAGAQPFLADGNQELFPCEVCGRRFAADVLERHGPICRKLFNKKRKPFNSLKQRLRGTDIPTVGKAPQSKPQPVRKSNWRQHHEDFINAIQSAKQCTLAIKEGRPLPPPPPPTVNPDYIQCPYCKRRFNETAASRHINFCKDQESRRVFDPAQTAARLASRAQGRAQMSPKKELTVTSAVGALLQNRALEASAAPTRPAVDPASGAKLRQGFAKSSKKD.

2 C2HC/C3H-type zinc fingers span residues 14 to 43 (ELFPCEVCGRRFAADVLERHGPICRKLFNK) and 117 to 146 (DYIQCPYCKRRFNETAASRHINFCKDQESR). Cysteine 18, cysteine 21, histidine 33, cysteine 37, cysteine 121, cysteine 124, histidine 136, and cysteine 140 together coordinate Zn(2+). Positions 190-219 (EASAAPTRPAVDPASGAKLRQGFAKSSKKD) are disordered.

Belongs to the ZC2HC1 family. Zn(2+) serves as cofactor.

This is Zinc finger C2HC domain-containing protein 1B (ZC2HC1B) from Bos taurus (Bovine).